Here is a 111-residue protein sequence, read N- to C-terminus: Cytochrome c2 (111 aa).

Heme c contacts are provided by cysteine 14, cysteine 17, histidine 18, and methionine 83.

Belongs to the cytochrome c family. In terms of processing, binds 1 heme c group covalently per subunit.

Cytochrome c2 is found mainly in purple, non-sulfur, photosynthetic bacteria where it functions as the electron donor to the oxidized bacteriochlorophyll in the photophosphorylation pathway. However, it may also have a role in the respiratory chain and is found in some non-photosynthetic bacteria. The protein is Cytochrome c2 of Agrobacterium tumefaciens (strain II Chrys).